The sequence spans 345 residues: MDSFRPHLAKVAGGLALDRAEARAAFDDLLSGEVTPVQAGAFLTALKVRGESVEEIVGAAEAMRARMTRVAAPENAVDVVGTGGDHSGSVNVSTLAAIVVAACGVPVAKHGNRAATSRSGAADVLAALGVRLGLDPAAQARCLDEAGLCFLFAQAHHPAMRHVAAVRSELPVRTIFNLLGPLSNPAGVGYQLFGVAQAALAEPLTRVLAELGSRRVWTVHGSDGLDEITVTGPTQVVALDEGRLCHFTIDPREFGLALRAPEELRGGDPADNARSLEAVLAGARNAYRDIAVLNAGAALVVAGAAQALADGVAQAQDAVDSGAARATLARLVRASNDHSNGQEGR.

5-phospho-alpha-D-ribose 1-diphosphate-binding positions include G81, 84–85 (GD), S89, 91–94 (NVST), 109–117 (KHGNRAATS), and A121. G81 serves as a coordination point for anthranilate. S93 is a binding site for Mg(2+). An anthranilate-binding site is contributed by N112. R167 is a binding site for anthranilate. Residues D226 and E227 each coordinate Mg(2+).

It belongs to the anthranilate phosphoribosyltransferase family. In terms of assembly, homodimer. Requires Mg(2+) as cofactor.

The enzyme catalyses N-(5-phospho-beta-D-ribosyl)anthranilate + diphosphate = 5-phospho-alpha-D-ribose 1-diphosphate + anthranilate. It participates in amino-acid biosynthesis; L-tryptophan biosynthesis; L-tryptophan from chorismate: step 2/5. In terms of biological role, catalyzes the transfer of the phosphoribosyl group of 5-phosphorylribose-1-pyrophosphate (PRPP) to anthranilate to yield N-(5'-phosphoribosyl)-anthranilate (PRA). This is Anthranilate phosphoribosyltransferase from Methylobacterium radiotolerans (strain ATCC 27329 / DSM 1819 / JCM 2831 / NBRC 15690 / NCIMB 10815 / 0-1).